Reading from the N-terminus, the 89-residue chain is Elongation factor 1-beta (89 aa).

This sequence belongs to the EF-1-beta/EF-1-delta family.

Its function is as follows. Promotes the exchange of GDP for GTP in EF-1-alpha/GDP, thus allowing the regeneration of EF-1-alpha/GTP that could then be used to form the ternary complex EF-1-alpha/GTP/AAtRNA. In Methanosarcina mazei (strain ATCC BAA-159 / DSM 3647 / Goe1 / Go1 / JCM 11833 / OCM 88) (Methanosarcina frisia), this protein is Elongation factor 1-beta.